The sequence spans 307 residues: Glycerol-3-phosphate dehydrogenase [NAD(P)+] (307 aa).

Positions 11, 31, and 95 each coordinate NADPH. Positions 95, 121, and 123 each coordinate sn-glycerol 3-phosphate. Alanine 125 contributes to the NADPH binding site. Positions 176, 229, 239, 240, and 241 each coordinate sn-glycerol 3-phosphate. The active-site Proton acceptor is lysine 176. Arginine 240 is an NADPH binding site. NADPH is bound at residue glutamate 261.

The protein belongs to the NAD-dependent glycerol-3-phosphate dehydrogenase family.

The protein localises to the cytoplasm. The catalysed reaction is sn-glycerol 3-phosphate + NAD(+) = dihydroxyacetone phosphate + NADH + H(+). It carries out the reaction sn-glycerol 3-phosphate + NADP(+) = dihydroxyacetone phosphate + NADPH + H(+). The protein operates within membrane lipid metabolism; glycerophospholipid metabolism. Functionally, catalyzes the reduction of the glycolytic intermediate dihydroxyacetone phosphate (DHAP) to sn-glycerol 3-phosphate (G3P), the key precursor for phospholipid synthesis. In Jannaschia sp. (strain CCS1), this protein is Glycerol-3-phosphate dehydrogenase [NAD(P)+].